The chain runs to 124 residues: Large ribosomal subunit protein bL12 (124 aa).

Belongs to the bacterial ribosomal protein bL12 family. Homodimer. Part of the ribosomal stalk of the 50S ribosomal subunit. Forms a multimeric L10(L12)X complex, where L10 forms an elongated spine to which 2 to 4 L12 dimers bind in a sequential fashion. Binds GTP-bound translation factors.

Functionally, forms part of the ribosomal stalk which helps the ribosome interact with GTP-bound translation factors. Is thus essential for accurate translation. The sequence is that of Large ribosomal subunit protein bL12 from Herminiimonas arsenicoxydans.